We begin with the raw amino-acid sequence, 190 residues long: DNA dC-&gt;dU-editing enzyme APOBEC-3C (190 aa).

A CMP/dCMP-type deaminase domain is found at 29-138 (DRNETWLCFT…PCYQEGLRSL (110 aa)). Residues 40–86 (EGIKRRSVVSWKTGVFRNQVDSETHCHAERCFLSWFCDDILSPNTKY) form a (Microbial infection) Required for interaction with human foamy virus protein Bet region. Zn(2+) is bound at residue histidine 66. Residue glutamate 68 is the Proton donor of the active site. Zn(2+) contacts are provided by cysteine 97 and cysteine 100.

It belongs to the cytidine and deoxycytidylate deaminase family. In terms of assembly, homodimer. Interacts with TRIB3. Interacts with AGO2. (Microbial infection) Interacts with human foamy virus protein Bet; this interaction does not induce APOBEC3C degradation but prevents its dimerization and incorporation into the virion by binding of Bet close to or within the APOBEC3C dimerization site. As to quaternary structure, (Microbial infection) Interacts with HIV-1 Vif. Zn(2+) is required as a cofactor. In terms of tissue distribution, expressed in spleen, testes, peripherical blood lymphocytes, heart, thymus, prostate and ovary.

It localises to the nucleus. The protein localises to the cytoplasm. It carries out the reaction a 2'-deoxycytidine in single-stranded DNA + H2O + H(+) = a 2'-deoxyuridine in single-stranded DNA + NH4(+). With respect to regulation, (Microbial infection) Antiviral activity is neutralized by the HIV-1 virion infectivity factor (Vif), that prevents its incorporation into progeny HIV-1 virions by both inhibiting its translation and/or by inducing its ubiquitination and subsequent degradation by the 26S proteasome. DNA deaminase (cytidine deaminase) which acts as an inhibitor of retrovirus replication and retrotransposon mobility via deaminase-dependent and -independent mechanisms. After the penetration of retroviral nucleocapsids into target cells of infection and the initiation of reverse transcription, it can induce the conversion of cytosine to uracil in the minus-sense single-strand viral DNA, leading to G-to-A hypermutations in the subsequent plus-strand viral DNA. The resultant detrimental levels of mutations in the proviral genome, along with a deamination-independent mechanism that works prior to the proviral integration, together exert efficient antiretroviral effects in infected target cells. Selectively targets single-stranded DNA and does not deaminate double-stranded DNA or single- or double-stranded RNA. Exhibits antiviral activity against simian immunodeficiency virus (SIV), hepatitis B virus (HBV), herpes simplex virus 1 (HHV-1) and Epstein-Barr virus (EBV) and may inhibit the mobility of LTR and non-LTR retrotransposons. May also play a role in the epigenetic regulation of gene expression through the process of active DNA demethylation. The polypeptide is DNA dC-&gt;dU-editing enzyme APOBEC-3C (APOBEC3C) (Homo sapiens (Human)).